The primary structure comprises 801 residues: Na(+)/H(+) antiporter subunit A1 (801 aa).

19 helical membrane-spanning segments follow: residues 1–21 (MSLL…IPIL), 28–48 (IHLG…MLTL), 79–99 (LGLL…LYSI), 117–137 (LFMG…LYLF), 166–186 (LIIT…LAIP), 206–226 (PFFI…SAQF), 265–285 (IFAA…ITLF), 300–320 (ILAF…GIGA), 337–357 (FTAA…LFMI), 373–393 (LGGL…TALS), 427–447 (LGYL…VYSI), 472–492 (ILML…GLFP), 522–542 (GLTP…LLIV), 591–611 (LVII…SVPF), 623–643 (IFEV…LFAK), 646–666 (LFNI…FIFF), 671–691 (LALT…LCFY), 707–727 (LTNA…GLIA), and 764–784 (MDTL…YTMI).

The protein belongs to the CPA3 antiporters (TC 2.A.63) subunit A family. May form a heterooligomeric complex that consists of seven subunits: mnhA1, mnhB1, mnhC1, mnhD1, mnhE1, mnhF1 and mnhG1.

Its subcellular location is the cell membrane. Mnh complex is a Na(+)/H(+) antiporter involved in Na(+) excretion. The protein is Na(+)/H(+) antiporter subunit A1 (mnhA1) of Staphylococcus aureus (strain bovine RF122 / ET3-1).